Consider the following 139-residue polypeptide: Arsenate reductase (139 aa).

Catalysis depends on nucleophile residues C10, C82, and C89. Cystine bridges form between C10–C82 and C82–C89.

Belongs to the low molecular weight phosphotyrosine protein phosphatase family. Thioredoxin-coupled ArsC subfamily.

It is found in the cytoplasm. The enzyme catalyses arsenate + [thioredoxin]-dithiol + H(+) = arsenite + [thioredoxin]-disulfide + H2O. Catalyzes the reduction of arsenate [As(V)] to arsenite [As(III)]. This Bacillus licheniformis (strain ATCC 14580 / DSM 13 / JCM 2505 / CCUG 7422 / NBRC 12200 / NCIMB 9375 / NCTC 10341 / NRRL NRS-1264 / Gibson 46) protein is Arsenate reductase.